A 470-amino-acid polypeptide reads, in one-letter code: Cyclic AMP-responsive element-binding protein 3-like protein 3 (470 aa).

The Cytoplasmic portion of the chain corresponds to 1–319 (MDGDISTGKM…TSKPAHAGTC (319 aa)). The segment at 59–145 (SDSDEFLNSI…PEPPRTQVHE (87 aa)) is disordered. In terms of domain architecture, bZIP spans 239–302 (VLKKIRRKIR…LSLLEQLKHL (64 aa)). Residues 241 to 270 (KKIRRKIRNKQSAQESRKKKKEYIDGLENR) are basic motif. Residues 281–302 (LQRKVLHLEKQNLSLLEQLKHL) are leucine-zipper. Lysine 290 participates in a covalent cross-link: Glycyl lysine isopeptide (Lys-Gly) (interchain with G-Cter in ubiquitin). The helical; Signal-anchor for type II membrane protein transmembrane segment at 320–340 (IAVLLLSFVLIILPSISPFTA) threads the bilayer. At 341 to 470 (NKVDSPGDFI…RVVQDALGVL (130 aa)) the chain is on the lumenal side. 2 N-linked (GlcNAc...) asparagine glycosylation sites follow: asparagine 410 and asparagine 417.

It belongs to the bZIP family. ATF subfamily. In terms of assembly, binds DNA as a dimer. May form homodimers. Interacts with ATF6. Interacts with SYNV1/HRD1; this interaction leads to CREB3L3 ubiquitination and proteasomal degradation. Controlled by regulated intramembrane proteolysis (RIP). Following ER stress a fragment containing the cytoplasmic transcription factor domain is released by proteolysis. The cleavage seems to be performed sequentially by site-1 and site-2 proteases (PS1 and PS2). Post-translationally, N-glycosylation is required for optimal proteolytic activation. In terms of processing, ubiquitinated at Lys-290 by SYNV1/HRD1 via 'Lys-27'-linked ubiquitin.

Its subcellular location is the endoplasmic reticulum membrane. It localises to the nucleus. Transcription factor that may act during endoplasmic reticulum stress by activating unfolded protein response target genes. Activated in response to cAMP stimulation. Binds the cAMP response element (CRE). Activates transcription through box-B element and CRE. Seems to function synergistically with ATF6. In acute inflammatory response, may activate expression of acute phase response (APR) genes. May be involved in growth suppression. Regulates FGF21 transcription. Plays a crucial role in the regulation of triglyceride metabolism and is required for the maintenance of normal plasma triglyceride concentrations. This Rattus norvegicus (Rat) protein is Cyclic AMP-responsive element-binding protein 3-like protein 3 (Creb3l3).